Reading from the N-terminus, the 67-residue chain is Sperm protamine P1 (67 aa).

Residues 1–67 form a disordered region; that stretch reads MASYRNSRSR…RRRKRNNENK (67 aa). Basic residues-rich tracts occupy residues 7-25 and 34-67; these read SRSR…RSRV and RSSR…NENK.

This sequence belongs to the protamine P1 family. In terms of tissue distribution, testis.

It is found in the nucleus. The protein resides in the chromosome. In terms of biological role, protamines substitute for histones in the chromatin of sperm during the haploid phase of spermatogenesis. They compact sperm DNA into a highly condensed, stable and inactive complex. This Isoodon macrourus (Short-nosed bandicoot) protein is Sperm protamine P1 (PRM1).